The chain runs to 97 residues: MSLLDAHIPQLVASQSAFAAKAGLMRHTIGQAEQAAMSAQAFHQGESSAAFQAAHARFVAAAAKVNTLLDVAQANLGEAAGTYVAADAAAASTYTGF.

The residue at position 2 (serine 2) is an N-acetylserine.

Belongs to the WXG100 family. CFP-10 subfamily. Forms a tight 1:1 complex with EsxH.

The protein resides in the secreted. Functionally, esxG, in complex with EsxH, disrupts ESCRT function and impairs host phagosome maturation, thereby promoting intracellular bacterial growth. The complex acts by interacting, via EsxH, with the host hepatocyte growth factor-regulated tyrosine kinase substrate (HGS/HRS), a component of the ESCRT machinery. EsxG stabilizes EsxH in the host cytosol. The sequence is that of ESAT-6-like protein EsxG from Mycobacterium tuberculosis (strain ATCC 25618 / H37Rv).